A 62-amino-acid polypeptide reads, in one-letter code: Chromatin protein Cren7 1 (62 aa).

It belongs to the Cren7 family. As to quaternary structure, monomer. In terms of processing, methylated at multiple sites, to varying extents.

The protein resides in the chromosome. The protein localises to the cytoplasm. Its function is as follows. A chromatin protein, binds double-stranded DNA without sequence specificity. Constrains negative DNA supercoils. The sequence is that of Chromatin protein Cren7 1 (cren7-1) from Hyperthermus butylicus (strain DSM 5456 / JCM 9403 / PLM1-5).